Here is a 246-residue protein sequence, read N- to C-terminus: Proteasome subunit alpha type-6-A (246 aa).

This sequence belongs to the peptidase T1A family. As to quaternary structure, component of the 20S core complex of the 26S proteasome. The 26S proteasome is composed of a core protease (CP), known as the 20S proteasome, capped at one or both ends by the 19S regulatory particle (RP/PA700). The 20S proteasome core is composed of 28 subunits that are arranged in four stacked rings, resulting in a barrel-shaped structure. The two end rings are each formed by seven alpha subunits, and the two central rings are each formed by seven beta subunits. The catalytic chamber with the active sites is on the inside of the barrel. In terms of tissue distribution, ubiquitous low levels, higher expression in siliques and flowers.

It is found in the cytoplasm. The protein resides in the nucleus. The proteasome is a multicatalytic proteinase complex which is characterized by its ability to cleave peptides with Arg, Phe, Tyr, Leu, and Glu adjacent to the leaving group at neutral or slightly basic pH. The proteasome has an ATP-dependent proteolytic activity. In Arabidopsis thaliana (Mouse-ear cress), this protein is Proteasome subunit alpha type-6-A (PAA1).